A 261-amino-acid chain; its full sequence is Tryptophan synthase alpha chain (261 aa).

Active-site proton acceptor residues include E47 and D58.

It belongs to the TrpA family. In terms of assembly, tetramer of two alpha and two beta chains.

It carries out the reaction (1S,2R)-1-C-(indol-3-yl)glycerol 3-phosphate + L-serine = D-glyceraldehyde 3-phosphate + L-tryptophan + H2O. Its pathway is amino-acid biosynthesis; L-tryptophan biosynthesis; L-tryptophan from chorismate: step 5/5. Its function is as follows. The alpha subunit is responsible for the aldol cleavage of indoleglycerol phosphate to indole and glyceraldehyde 3-phosphate. This is Tryptophan synthase alpha chain from Neisseria gonorrhoeae (strain ATCC 700825 / FA 1090).